The sequence spans 179 residues: Adenine phosphoribosyltransferase (179 aa).

This sequence belongs to the purine/pyrimidine phosphoribosyltransferase family. Homodimer.

Its subcellular location is the cytoplasm. It carries out the reaction AMP + diphosphate = 5-phospho-alpha-D-ribose 1-diphosphate + adenine. Its pathway is purine metabolism; AMP biosynthesis via salvage pathway; AMP from adenine: step 1/1. Functionally, catalyzes a salvage reaction resulting in the formation of AMP, that is energically less costly than de novo synthesis. This chain is Adenine phosphoribosyltransferase, found in Bradyrhizobium diazoefficiens (strain JCM 10833 / BCRC 13528 / IAM 13628 / NBRC 14792 / USDA 110).